The chain runs to 490 residues: Histone-lysine N-methyltransferase, H3 lysine-9 specific (490 aa).

A Chromo domain is found at 8 to 69 (YEVERIVDEK…RKRRLKGSNS (62 aa)). Disordered regions lie at residues 61–133 (KRRL…TALT) and 150–190 (KKLG…KPRN). Basic and acidic residues predominate over residues 102–114 (FSRELNVKKENKK). The span at 115-133 (VFSSQTTKRQSRKQSTALT) shows a compositional bias: polar residues. Lysine 127 bears the N6,N6,N6-trimethyllysine; alternate mark. Lysine 127 is subject to N6-methyllysine; alternate. The span at 155-168 (TRNEVKEESQKREL) shows a compositional bias: basic and acidic residues. A compositionally biased stretch (polar residues) spans 169–185 (VSNSIKEATSPKTSSIL). In terms of domain architecture, Pre-SET spans 258 to 325 (SGCNCSSLGG…ECPNRVVQRG (68 aa)). Residues cysteine 260, cysteine 262, cysteine 268, cysteine 276, cysteine 278, cysteine 307, cysteine 311, cysteine 313, and cysteine 317 each coordinate Zn(2+). The SET domain maps to 328–452 (LPLEIFKTKE…PLEELTFDYA (125 aa)). Residues 338-340 (KGW), tyrosine 381, arginine 406, and 407-410 (FFNH) each bind S-adenosyl-L-methionine. Residue cysteine 412 coordinates Zn(2+). An autoregulatory loop region spans residues 453–472 (GAKDFSPVQSQKSQQNRISK). Residue lysine 455 is modified to N6,N6,N6-trimethyllysine; by autocatalysis; alternate. At lysine 455 the chain carries N6,N6-dimethyllysine; by autocatalysis; alternate. Lysine 455 is subject to N6-methyllysine; by autocatalysis; alternate. N6-methyllysine is present on lysine 464. The region spanning 473 to 489 (LRRQCKCGSANCRGWLF) is the Post-SET domain. Residues cysteine 477, cysteine 479, and cysteine 484 each contribute to the Zn(2+) site. Residue 477 to 478 (CK) coordinates S-adenosyl-L-methionine.

Belongs to the class V-like SAM-binding methyltransferase superfamily. Histone-lysine methyltransferase family. Suvar3-9 subfamily. Component of the Clr4 methyltransferase complex (ClrC) composed of at least clr4, rik1, pcu4, rbx1, raf1 and raf2. The cullin pcu4, rik1, raf1, raf2 and the ring-box protein rbx1 are components of an E3 ubiquitin ligase, whose activity is essential for heterochromatin assembly. Interacts directly with pcu4. Interacts with mlo3. In terms of processing, autocatalytic methylation of specific lysine residues in an internal loop (autoregulatory loop) promote a conformational switch that enhances the H3K9me activity of clr4.

It is found in the nucleus. It localises to the cytoplasm. The protein resides in the cytoskeleton. Its subcellular location is the microtubule organizing center. The protein localises to the spindle pole body. It is found in the chromosome. The catalysed reaction is L-lysyl(9)-[histone H3] + 3 S-adenosyl-L-methionine = N(6),N(6),N(6)-trimethyl-L-lysyl(9)-[histone H3] + 3 S-adenosyl-L-homocysteine + 3 H(+). It catalyses the reaction N(6)-methyl-L-lysyl(9)-[histone H3] + S-adenosyl-L-methionine = N(6),N(6)-dimethyl-L-lysyl(9)-[histone H3] + S-adenosyl-L-homocysteine + H(+). The enzyme catalyses N(6),N(6)-dimethyl-L-lysyl(9)-[histone H3] + S-adenosyl-L-methionine = N(6),N(6),N(6)-trimethyl-L-lysyl(9)-[histone H3] + S-adenosyl-L-homocysteine + H(+). It carries out the reaction L-lysyl-[protein] + S-adenosyl-L-methionine = N(6)-methyl-L-lysyl-[protein] + S-adenosyl-L-homocysteine + H(+). The catalysed reaction is N(6)-methyl-L-lysyl-[protein] + S-adenosyl-L-methionine = N(6),N(6)-dimethyl-L-lysyl-[protein] + S-adenosyl-L-homocysteine + H(+). It catalyses the reaction N(6),N(6)-dimethyl-L-lysyl-[protein] + S-adenosyl-L-methionine = N(6),N(6),N(6)-trimethyl-L-lysyl-[protein] + S-adenosyl-L-homocysteine + H(+). The enzyme catalyses L-lysyl(9)-[histone H3] + S-adenosyl-L-methionine = N(6)-methyl-L-lysyl(9)-[histone H3] + S-adenosyl-L-homocysteine + H(+). An internal loop (autoregulatory loop) inhibits the catalytic activity of the enzyme by blocking the histone H3K9 substrate-binding pocket. Autocatalytic methylation of specific lysine residues in this loop promote a conformational switch that enhances the H3K9me activity of clr4. Its function is as follows. Histone methyltransferase which contributes to the establishment of heterochromatin by specifically methylating histone H3 to form H3K9me. Part of the Clr4 methyltransferase complex (ClrC). ClrC preferentially ubiquitylates H3K14 and ClrC-mediated H3 ubiquitination promotes clr4 methyltransferase activity. Clr4 functions as a reader and writer of H3K9 methylation. It sets the H3K9me mark and afterwards this H3K9me mark is recognized by the chromodomains of clr4 and swi6/HP1, which then recruit additional clr4 leading to the methylation of neighboring nucleosomes. H3K9me represents a specific tag for epigenetic transcriptional repression by recruiting swi6/HP1 to methylated histones which leads to transcriptional silencing within centromeric heterochromatin, telomeres, ribosomal DNA repeats, and the silent mating-type region. Clr4 methyltransferase activity promotes the assembly of a tripartite complex composed of ClrC and complexes involved in siRNA generation. Apart from H3K9, also methylates non-histone proteins such as mlo3. Interacts with mlo3 to promote the processing of centromeric and antisense RNAs. The chain is Histone-lysine N-methyltransferase, H3 lysine-9 specific (clr4) from Schizosaccharomyces pombe (strain 972 / ATCC 24843) (Fission yeast).